Here is a 330-residue protein sequence, read N- to C-terminus: Transcription factor TGA5 (330 aa).

Residues 1 to 13 show a composition bias toward polar residues; the sequence is MGDTSPRTSVSTD. The disordered stretch occupies residues 1–64; sequence MGDTSPRTSV…REAARKSRLR (64 aa). Residues 35–47 are compositionally biased toward basic and acidic residues; sequence SSDRSKSKMDQKT. Positions 44–107 constitute a bZIP domain; the sequence is DQKTLRRLAQ…SSGDQAHSTA (64 aa). 2 coiled-coil regions span residues 45 to 98 and 211 to 244; these read QKTL…FISS and EQQS…SLAD. A basic motif region spans residues 46–66; that stretch reads KTLRRLAQNREAARKSRLRKK. The segment at 72 to 86 is leucine-zipper; the sequence is LENSRLKLTQLEQEL. In terms of domain architecture, DOG1 spans 111–327; it reads AMAFDVEYRR…RALSSLWLAR (217 aa).

This sequence belongs to the bZIP family. As to quaternary structure, binds DNA as a dimer. Interaction with the Dof domain protein OBP1 enhances the binding to the ocs element. Interacts with NPR1, NPR3 and NPR4. In terms of tissue distribution, predominantly expressed in roots.

Its subcellular location is the nucleus. Transcriptional activator that binds specifically to the DNA sequence 5'-TGACG-3'. Recognizes ocs elements like the as-1 motif of the cauliflower mosaic virus 35S promoter. Binding to the as-1-like cis elements mediate auxin- and salicylic acid-inducible transcription. May be involved in the induction of the systemic acquired resistance (SAR) via its interaction with NPR1. Could also bind to the Hex-motif (5'-TGACGTGG-3') another cis-acting element found in plant histone promoters. The chain is Transcription factor TGA5 (TGA5) from Arabidopsis thaliana (Mouse-ear cress).